The sequence spans 388 residues: P2X purinoceptor 4 (388 aa).

The Cytoplasmic segment spans residues 1–33; it reads MAGCCAALAAFLFEYDTPRIVLIRSRKVGLMNR. The helical transmembrane segment at 34-54 threads the bilayer; sequence AVQLLILAYVIGWVFVWEKGY. Topologically, residues 55 to 338 are extracellular; sequence QETDSVVSSV…KFDIIPTMIN (284 aa). The ATP site is built by K67 and K69. CTP is bound by residues K67 and K69. N-linked (GlcNAc...) asparagine glycosylation is found at N75 and N110. 3 disulfide bridges follow: C116/C165, C126/C149, and C132/C159. N153 and N184 each carry an N-linked (GlcNAc...) asparagine glycan. T186 and L188 together coordinate ATP. Position 186 (T186) interacts with CTP. N199 and N208 each carry an N-linked (GlcNAc...) asparagine glycan. Disulfide bonds link C217/C227 and C261/C270. ATP-binding residues include N293, R295, and K313. The CTP site is built by N293, R295, and K313. Residues 339-359 form a helical membrane-spanning segment; that stretch reads IGSGLALLGMATVLCDIIVLY. Residues 360 to 388 are Cytoplasmic-facing; that stretch reads CMKKRLYYREKKYKYVEDYEQGLASELDQ.

This sequence belongs to the P2X receptor family. Functional P2RXs are organized as homomeric and heteromeric trimers. Forms heterotrimer with P2RX1. Interacts with P2RX7 (via C-terminus); this interaction is functional only in the presence of ATP. Forms heterotrimer with P2RX4; functional differences between homomeric P2RX4 and P2RX4/6 heterotrimer are minor. Interacts with AP1M2.

The protein resides in the cell membrane. It localises to the lysosome membrane. The enzyme catalyses K(+)(in) = K(+)(out). The catalysed reaction is Na(+)(in) = Na(+)(out). It catalyses the reaction Ca(2+)(in) = Ca(2+)(out). Activated by ATP. pH-dependent and inhibited by acidic pH. Functionally, ATP-gated nonselective transmembrane cation channel permeable to potassium, sodium and calcium. CTP, but not GTP or UTP, functions as a weak affinity agonist for P2RX4. Activated by extracellularly released ATP, it plays multiple role in immunity and central nervous system physiology. Plays a key role in initial steps of T-cell activation and Ca(2+) microdomain formation. Also participates in basal T-cell activity without TCR/CD3 stimulation. Promotes the differentiation and activation of Th17 cells via expression of retinoic acid-related orphan receptor C/RORC. Upon activation, drives microglia motility via the PI3K/Akt pathway. Could also function as an ATP-gated cation channel of lysosomal membranes. The sequence is that of P2X purinoceptor 4 (P2RX4) from Homo sapiens (Human).